The following is a 175-amino-acid chain: Nascent polypeptide-associated complex subunit beta (175 aa).

Disordered stretches follow at residues methionine 1–aspartate 36 and arginine 129–glutamate 175. Residues glutamine 34–valine 101 enclose the NAC-A/B domain. Acidic residues predominate over residues glutamate 149–glutamate 163. Residues alanine 164–glutamate 175 are compositionally biased toward basic and acidic residues.

It belongs to the NAC-beta family. In terms of assembly, part of the nascent polypeptide-associated complex (NAC), consisting of EGD2 and EGD1. NAC associates with ribosomes via EGD1.

The protein resides in the cytoplasm. The protein localises to the nucleus. Functionally, component of the nascent polypeptide-associated complex (NAC), a dynamic component of the ribosomal exit tunnel, protecting the emerging polypeptides from interaction with other cytoplasmic proteins to ensure appropriate nascent protein targeting. The NAC complex also promotes mitochondrial protein import by enhancing productive ribosome interactions with the outer mitochondrial membrane and blocks the inappropriate interaction of ribosomes translating non-secretory nascent polypeptides with translocation sites in the membrane of the endoplasmic reticulum. EGD1 may act as a transcription factor that exert a negative effect on the expression of several genes that are transcribed by RNA polymerase II. This chain is Nascent polypeptide-associated complex subunit beta (EGD1), found in Cryptococcus neoformans var. neoformans serotype D (strain B-3501A) (Filobasidiella neoformans).